Reading from the N-terminus, the 420-residue chain is Protein MucB (420 aa).

The region spanning 2-187 is the UmuC domain; it reads FALIDVNGMY…LPVAEVWGVG (186 aa).

This sequence belongs to the DNA polymerase type-Y family.

In terms of biological role, involved in UV protection and mutation. This chain is Protein MucB (mucB), found in Escherichia coli.